The primary structure comprises 337 residues: Vacuolar protein sorting-associated protein 26B (337 aa).

Residues 311 to 337 (SQRFEGTSHPETRPQHSGAAAVEQEQE) are disordered.

The protein belongs to the VPS26 family. Component of the heterotrimeric retromer cargo-selective complex (CSC) which is believed to associate with variable sorting nexins to form functionally distinct retromer complex variants.

It is found in the cytoplasm. The protein localises to the membrane. It localises to the endosome. Acts as a component of the retromer cargo-selective complex (CSC). The CSC is believed to be the core functional component of retromer or respective retromer complex variants acting to prevent missorting of selected transmembrane cargo proteins into the lysosomal degradation pathway. Retromer mediates retrograde transport of cargo proteins from endosomes to the trans-Golgi network (TGN). The chain is Vacuolar protein sorting-associated protein 26B (vps26b) from Xenopus tropicalis (Western clawed frog).